A 427-amino-acid polypeptide reads, in one-letter code: Glucose-1-phosphate adenylyltransferase (427 aa).

Alpha-D-glucose 1-phosphate is bound by residues Tyr-121, Gly-186, 201–202 (EK), and Ser-219.

The protein belongs to the bacterial/plant glucose-1-phosphate adenylyltransferase family. As to quaternary structure, homotetramer.

The enzyme catalyses alpha-D-glucose 1-phosphate + ATP + H(+) = ADP-alpha-D-glucose + diphosphate. It participates in glycan biosynthesis; glycogen biosynthesis. Functionally, involved in the biosynthesis of ADP-glucose, a building block required for the elongation reactions to produce glycogen. Catalyzes the reaction between ATP and alpha-D-glucose 1-phosphate (G1P) to produce pyrophosphate and ADP-Glc. This chain is Glucose-1-phosphate adenylyltransferase, found in Corynebacterium diphtheriae (strain ATCC 700971 / NCTC 13129 / Biotype gravis).